The chain runs to 279 residues: Bifunctional protein FolD 1 (279 aa).

NADP(+) is bound by residues 166–168 and Ser191; that span reads GRS.

Belongs to the tetrahydrofolate dehydrogenase/cyclohydrolase family. Homodimer.

It carries out the reaction (6R)-5,10-methylene-5,6,7,8-tetrahydrofolate + NADP(+) = (6R)-5,10-methenyltetrahydrofolate + NADPH. The enzyme catalyses (6R)-5,10-methenyltetrahydrofolate + H2O = (6R)-10-formyltetrahydrofolate + H(+). It participates in one-carbon metabolism; tetrahydrofolate interconversion. Catalyzes the oxidation of 5,10-methylenetetrahydrofolate to 5,10-methenyltetrahydrofolate and then the hydrolysis of 5,10-methenyltetrahydrofolate to 10-formyltetrahydrofolate. The sequence is that of Bifunctional protein FolD 1 from Salinispora arenicola (strain CNS-205).